The primary structure comprises 249 residues: Proteasome subunit alpha type-7 (249 aa).

The protein belongs to the peptidase T1A family. In terms of assembly, the 26S proteasome consists of a 20S proteasome core and two 19S regulatory subunits. The 20S proteasome core is composed of 28 subunits that are arranged in four stacked rings, resulting in a barrel-shaped structure. The two end rings are each formed by seven alpha subunits, and the two central rings are each formed by seven beta subunits. The catalytic chamber with the active sites is on the inside of the barrel.

The protein resides in the cytoplasm. It localises to the nucleus. In terms of biological role, the proteasome is a multicatalytic proteinase complex which is characterized by its ability to cleave peptides with Arg, Phe, Tyr, Leu, and Glu adjacent to the leaving group at neutral or slightly basic pH. The proteasome has an ATP-dependent proteolytic activity. This chain is Proteasome subunit alpha type-7 (PAD1), found in Cicer arietinum (Chickpea).